The chain runs to 450 residues: Glutamyl-tRNA(Gln) amidotransferase subunit A, mitochondrial (450 aa).

Residues lysine 47 and serine 122 each act as charge relay system in the active site. Serine 146 serves as the catalytic Acyl-ester intermediate.

The protein belongs to the amidase family. GatA subfamily. In terms of assembly, subunit of the heterotrimeric GatFAB amidotransferase (AdT) complex, composed of A, B and F subunits.

Its subcellular location is the mitochondrion. It catalyses the reaction L-glutamyl-tRNA(Gln) + L-glutamine + ATP + H2O = L-glutaminyl-tRNA(Gln) + L-glutamate + ADP + phosphate + H(+). Its function is as follows. Allows the formation of correctly charged Gln-tRNA(Gln) through the transamidation of misacylated Glu-tRNA(Gln) in the mitochondria. The reaction takes place in the presence of glutamine and ATP through an activated gamma-phospho-Glu-tRNA(Gln). This chain is Glutamyl-tRNA(Gln) amidotransferase subunit A, mitochondrial, found in Candida albicans (strain WO-1) (Yeast).